Reading from the N-terminus, the 698-residue chain is Long-chain-fatty-acid--CoA ligase 1 (698 aa).

The residue at position 1 (Met1) is an N-acetylmethionine. Tyr9 carries the 3'-nitrotyrosine modification. A helical; Signal-anchor for type III membrane protein membrane pass occupies residues 25–45; sequence LPTNTLMGFGAFAALTTFWYA. Residues 46–698 lie on the Cytoplasmic side of the membrane; it reads TRPKPLKPPC…IDDLYSTIKV (653 aa). Phosphotyrosine is present on Tyr84. Ser135 carries O-linked (GlcNAc) serine glycosylation. Lys207, Lys356, and Lys386 each carry N6-acetyllysine. Ser620 bears the Phosphoserine mark. Position 632 is an N6-acetyllysine (Lys632).

Belongs to the ATP-dependent AMP-binding enzyme family. Mg(2+) is required as a cofactor. As to expression, highly expressed in liver, heart, skeletal muscle, kidney and erythroid cells, and to a lesser extent in brain, lung, placenta and pancreas.

Its subcellular location is the mitochondrion outer membrane. It localises to the peroxisome membrane. The protein localises to the microsome membrane. The protein resides in the endoplasmic reticulum membrane. The catalysed reaction is a long-chain fatty acid + ATP + CoA = a long-chain fatty acyl-CoA + AMP + diphosphate. It carries out the reaction (5Z,8Z,11Z,14Z)-eicosatetraenoate + ATP + CoA = (5Z,8Z,11Z,14Z)-eicosatetraenoyl-CoA + AMP + diphosphate. The enzyme catalyses 3,7,11,15-tetramethylhexadecanoate + ATP + CoA = phytanoyl-CoA + AMP + diphosphate. It catalyses the reaction hexadecanoate + ATP + CoA = hexadecanoyl-CoA + AMP + diphosphate. The catalysed reaction is (E)-hexadec-2-enoate + ATP + CoA = (2E)-hexadecenoyl-CoA + AMP + diphosphate. It carries out the reaction 2,6,10,14-tetramethylpentadecanoate + ATP + CoA = pristanoyl-CoA + AMP + diphosphate. The enzyme catalyses 14,15-epoxy-(5Z,8Z,11Z)-eicosatrienoate + ATP + CoA = 14,15-epoxy-(5Z,8Z,11Z)-eicosatrienoyl-CoA + AMP + diphosphate. It catalyses the reaction 5-hydroxy-(6E,8Z,11Z,14Z)-eicosatetraenoate + ATP + CoA = 5-hydroxy-(6E,8Z,11Z,14Z)-eicosatetraenoyl-CoA + AMP + diphosphate. The catalysed reaction is 12-hydroxy-(5Z,8Z,10E,14Z)-eicosatetraenoate + ATP + CoA = 12-hydroxy-(5Z,8Z,10E,14Z)-eicosatetraenoyl-CoA + AMP + diphosphate. It carries out the reaction 15-hydroxy-(5Z,8Z,11Z,13E)-eicosatetraenoate + ATP + CoA = 15-hydroxy-(5Z,8Z,11Z,13E)-eicosatetraenoyl-CoA + AMP + diphosphate. The enzyme catalyses (9Z)-octadecenoate + ATP + CoA = (9Z)-octadecenoyl-CoA + AMP + diphosphate. Inhibited at high temperature and by arachidonate. Catalyzes the conversion of long-chain fatty acids to their active form acyl-CoAs for both synthesis of cellular lipids, and degradation via beta-oxidation. Preferentially uses palmitoleate, oleate and linoleate. Preferentially activates arachidonate than epoxyeicosatrienoic acids (EETs) or hydroxyeicosatrienoic acids (HETEs). The protein is Long-chain-fatty-acid--CoA ligase 1 of Homo sapiens (Human).